A 152-amino-acid chain; its full sequence is Deoxyuridine 5'-triphosphate nucleotidohydrolase (152 aa).

Residues 71–73, asparagine 84, 88–90, and methionine 98 each bind substrate; these read RSG and LID.

Belongs to the dUTPase family. It depends on Mg(2+) as a cofactor.

It carries out the reaction dUTP + H2O = dUMP + diphosphate + H(+). It participates in pyrimidine metabolism; dUMP biosynthesis; dUMP from dCTP (dUTP route): step 2/2. Its function is as follows. This enzyme is involved in nucleotide metabolism: it produces dUMP, the immediate precursor of thymidine nucleotides and it decreases the intracellular concentration of dUTP so that uracil cannot be incorporated into DNA. The polypeptide is Deoxyuridine 5'-triphosphate nucleotidohydrolase (Haemophilus ducreyi (strain 35000HP / ATCC 700724)).